The primary structure comprises 601 residues: DnaJ-like protein MG200 (601 aa).

In terms of domain architecture, J spans 5 to 77 (KRDYYEVLGI…DKYGFDGVDG (73 aa)). Disordered regions lie at residues 143-163 (VQQN…VPGE) and 205-272 (VDSE…EPIP). Residues 151-160 (KDPDELRSKV) show a composition bias toward basic and acidic residues. A compositionally biased stretch (pro residues) spans 263 to 272 (EPTPIPEPIP).

The sequence is that of DnaJ-like protein MG200 from Mycoplasma genitalium (strain ATCC 33530 / DSM 19775 / NCTC 10195 / G37) (Mycoplasmoides genitalium).